The following is a 224-amino-acid chain: Glutathione S-transferase U4 (224 aa).

Residues 6-85 enclose the GST N-terminal domain; that stretch reads EDVKLLGFWA…YIDQIWKNNP (80 aa). Glutathione contacts are provided by residues 16–17, 42–43, 56–57, and 69–70; these read SP, NK, KV, and ES. The GST C-terminal domain occupies 90-217; sequence DPYEKAMALF…EEQIEHMKKV (128 aa). T151 carries the post-translational modification Phosphothreonine.

Belongs to the GST superfamily. Tau family.

The protein resides in the cytoplasm. The protein localises to the cytosol. It catalyses the reaction RX + glutathione = an S-substituted glutathione + a halide anion + H(+). Functionally, may be involved in the conjugation of reduced glutathione to a wide number of exogenous and endogenous hydrophobic electrophiles and have a detoxification role against certain herbicides. In Arabidopsis thaliana (Mouse-ear cress), this protein is Glutathione S-transferase U4 (GSTU4).